The primary structure comprises 321 residues: MPLTMTITNSLMYIIPILIAVAFLTLMERKMLGYMQLRKGPNITGPYGLLQPIADGLKLFTKEPIRPLNTSPILLILSPMLALTTALLIWTPIPMPHALTNLNLGLLSTLAISSMAVNSTLWAGWAPNSKYALIGSLRAVAQTISYEVTLGIILLSTLMLTGGFTMQLLTTTQKHTWLLTTSWPLAMMWFISTLAETNRAPFDLTEGESELVSGFNVEYAGGPFALFFLAEYTNIISMNLLTCILFINPGPTQHPELFLTNLIIKTMILSMSFLWIRASYPRFRYDQLMHLLWKQFLPLTMALCLLHTSLSISISGIPPLS.

A run of 8 helical transmembrane segments spans residues 7-27 (ITNS…LTLM), 73-93 (ILLI…WTPI), 104-124 (LGLL…LWAG), 148-168 (VTLG…TMQL), 175-195 (HTWL…STLA), 227-247 (FFLA…ILFI), 256-276 (ELFL…FLWI), and 297-317 (LPLT…ISGI).

This sequence belongs to the complex I subunit 1 family.

It is found in the mitochondrion inner membrane. The enzyme catalyses a ubiquinone + NADH + 5 H(+)(in) = a ubiquinol + NAD(+) + 4 H(+)(out). Its function is as follows. Core subunit of the mitochondrial membrane respiratory chain NADH dehydrogenase (Complex I) that is believed to belong to the minimal assembly required for catalysis. Complex I functions in the transfer of electrons from NADH to the respiratory chain. The immediate electron acceptor for the enzyme is believed to be ubiquinone. The sequence is that of NADH-ubiquinone oxidoreductase chain 1 (MT-ND1) from Varanus dumerilii (Dumeril's monitor).